Reading from the N-terminus, the 963-residue chain is MHC class II regulatory factor RFX1 (963 aa).

Disordered stretches follow at residues 1–88 (MATQ…APSP), 105–126 (ASET…VPTQ), 174–218 (QSPA…GTPA), and 361–392 (SSSE…GSSG). A compositionally biased stretch (pro residues) spans 20–41 (PQAPPQALPQPPPPAAPQPPAA). Over residues 42-67 (ATPQPQYVTELQSPQPQTQPPGSQKQ) the composition is skewed to low complexity. Ser-54 carries the post-translational modification Phosphoserine. The span at 75 to 87 (APAPSQPATPAPS) shows a compositional bias: pro residues. Composition is skewed to polar residues over residues 107 to 119 (ETVS…STAS), 181 to 196 (KSGQ…QQVH), and 204 to 214 (VQANNSTSKTA). Residues 361-372 (SSSEAGASNSSV) show a composition bias toward low complexity. The segment covering 373 to 392 (GAGGNGGGGSSGGGSGGSSG) has biased composition (gly residues). The RFX-type winged-helix DNA-binding region spans 423 to 498 (TVQWLLDNYE…YHYYGLRIKA (76 aa)). The interval 899 to 948 (SLNPLDPDKDEEEEEEEESEDELPQDISLAAGSESPALGPEALEPPAKLA) is disordered. Over residues 906-922 (DKDEEEEEEEESEDELP) the composition is skewed to acidic residues. The span at 932-947 (ESPALGPEALEPPAKL) shows a compositional bias: low complexity. Residues Ser-962 and Ser-963 each carry the phosphoserine modification.

Belongs to the RFX family. Homodimer; binds DNA as a homodimer. Heterodimer; heterodimerizes with RFX2 and RFX3.

The protein localises to the nucleus. Regulatory factor essential for MHC class II genes expression. Binds to the X boxes of MHC class II genes. The polypeptide is MHC class II regulatory factor RFX1 (Rfx1) (Mus musculus (Mouse)).